We begin with the raw amino-acid sequence, 106 residues long: A-type ATP synthase subunit F (106 aa).

This sequence belongs to the V-ATPase F subunit family. As to quaternary structure, has multiple subunits with at least A(3), B(3), C, D, E, F, H, I and proteolipid K(x).

It localises to the cell membrane. Component of the A-type ATP synthase that produces ATP from ADP in the presence of a proton gradient across the membrane. This is A-type ATP synthase subunit F from Methanothermobacter thermautotrophicus (strain ATCC 29096 / DSM 1053 / JCM 10044 / NBRC 100330 / Delta H) (Methanobacterium thermoautotrophicum).